Reading from the N-terminus, the 89-residue chain is Cell division topological specificity factor (89 aa).

The protein belongs to the MinE family.

Its function is as follows. Prevents the cell division inhibition by proteins MinC and MinD at internal division sites while permitting inhibition at polar sites. This ensures cell division at the proper site by restricting the formation of a division septum at the midpoint of the long axis of the cell. In Pectobacterium carotovorum subsp. carotovorum (strain PC1), this protein is Cell division topological specificity factor.